The sequence spans 342 residues: Bifunctional terpene synthase Agr4 (342 aa).

4 residues coordinate Mg(2+): D87, N222, S226, and E230. The DDXXD motif motif lies at 87–91 (DEVSD). 2 residues coordinate (2E,6E)-farnesyl diphosphate: R308 and Y309.

It belongs to the terpene synthase family. Mg(2+) serves as cofactor.

It catalyses the reaction (2E,6E)-farnesyl diphosphate = delta-cadinene + diphosphate. The enzyme catalyses (2E,6E)-farnesyl diphosphate = gamma-muurolene + diphosphate. It carries out the reaction (2E,6E)-farnesyl diphosphate = beta-copaene + diphosphate. The catalysed reaction is (2E)-geranyl diphosphate = beta-myrcene + diphosphate. Functionally, terpene cyclase that catalyzes the cyclization of farnesyl diphosphate (FPP) to various sesquiterpenes, including beta-copaene, alpha-cubebene, cadina-1(6),4-diene, gamma-muurolene, delta-cadinene, epizonarene, epicubenol and cubenol. Agr4 is also able to use the monoterpene precursor geranyl diphosphate (GPP) as substrates to synthesize the monoterpene beta-myrcene. Delta-cadinene is the major product of Agr4. This is Bifunctional terpene synthase Agr4 from Cyclocybe aegerita (Black poplar mushroom).